Reading from the N-terminus, the 290-residue chain is ATP synthase gamma chain (290 aa).

It belongs to the ATPase gamma chain family. F-type ATPases have 2 components, CF(1) - the catalytic core - and CF(0) - the membrane proton channel. CF(1) has five subunits: alpha(3), beta(3), gamma(1), delta(1), epsilon(1). CF(0) has three main subunits: a, b and c.

The protein resides in the cell inner membrane. Functionally, produces ATP from ADP in the presence of a proton gradient across the membrane. The gamma chain is believed to be important in regulating ATPase activity and the flow of protons through the CF(0) complex. In Desulfotalea psychrophila (strain LSv54 / DSM 12343), this protein is ATP synthase gamma chain.